Here is a 336-residue protein sequence, read N- to C-terminus: Opsin-1, short-wave-sensitive 1 (336 aa).

The Extracellular portion of the chain corresponds to Met-1 to Ala-29. Residue Asn-10 is glycosylated (N-linked (GlcNAc...) asparagine). The helical transmembrane segment at Phe-30–Val-54 threads the bilayer. The Cytoplasmic portion of the chain corresponds to Thr-55–Asn-66. The helical transmembrane segment at Tyr-67–Ala-91 threads the bilayer. The Extracellular portion of the chain corresponds to Ala-92–Glu-106. Residues Cys-103 and Cys-180 are joined by a disulfide bond. The helical transmembrane segment at Ala-107–Phe-126 threads the bilayer. Topologically, residues Glu-127–Gln-145 are cytoplasmic. Residues Ala-146 to Ser-169 form a helical membrane-spanning segment. Residues Arg-170–Ser-195 lie on the Extracellular side of the membrane. Residues Tyr-196–Leu-223 form a helical membrane-spanning segment. The Cytoplasmic portion of the chain corresponds to Arg-224–Arg-245. Residues Met-246–Ala-269 traverse the membrane as a helical segment. Residues Asn-270–Asp-277 are Extracellular-facing. The chain crosses the membrane as a helical span at residues Tyr-278 to Met-302. An N6-(retinylidene)lysine modification is found at Lys-289. Topologically, residues Asn-303–Ala-336 are cytoplasmic.

It belongs to the G-protein coupled receptor 1 family. Opsin subfamily. In terms of processing, phosphorylated on some or all of the serine and threonine residues present in the C-terminal region. In terms of tissue distribution, retinal short single cones, outer and inner segments.

It localises to the membrane. Functionally, visual pigments are the light-absorbing molecules that mediate vision. They consist of an apoprotein, opsin, covalently linked to cis-retinal. The sequence is that of Opsin-1, short-wave-sensitive 1 (opn1sw1) from Danio rerio (Zebrafish).